The following is a 402-amino-acid chain: MAT+ sexual cell fertilization-promoting factor (402 aa).

The segment at residues 169–237 (IPRPPNAYIL…KLMSAHPHYR (69 aa)) is a DNA-binding region (HMG box). Residues 246 to 272 (IRRRAPRRNRAQEVANASPIGENSGAP) are disordered.

The protein localises to the nucleus. Functionally, controls fertilization, probably by determining the mating type. This is MAT+ sexual cell fertilization-promoting factor (FPR1) from Podospora anserina (Pleurage anserina).